The following is a 413-amino-acid chain: Na(+)/H(+) antiporter NhaA (413 aa).

Transmembrane regions (helical) follow at residues 15–35 (LESG…ALFV), 57–77 (LLHW…GLEI), 93–113 (ALPC…YASL), 123–143 (GWAI…SLLG), 152–172 (IFLA…IAVF), 175–195 (AELN…LLGF), 211–231 (VALW…GVVL), 261–281 (WVAF…SFAG), 295–315 (VALG…WLAI), 333–353 (GVSL…LLAF), and 364–384 (VGVL…LSLT).

This sequence belongs to the NhaA Na(+)/H(+) (TC 2.A.33) antiporter family.

The protein resides in the cell inner membrane. It catalyses the reaction Na(+)(in) + 2 H(+)(out) = Na(+)(out) + 2 H(+)(in). Its function is as follows. Na(+)/H(+) antiporter that extrudes sodium in exchange for external protons. This Caulobacter vibrioides (strain ATCC 19089 / CIP 103742 / CB 15) (Caulobacter crescentus) protein is Na(+)/H(+) antiporter NhaA.